The following is a 732-amino-acid chain: Coagulation factor XIII A chain (732 aa).

The segment at Met1–Asp26 is disordered. At Ser2 the chain carries N-acetylserine. Residues Ser2 to Arg38 constitute a propeptide, activation peptide. Catalysis depends on residues Cys315, His374, and Asp397. Positions 437, 439, 486, and 491 each coordinate Ca(2+). Residue Asn614 is glycosylated (N-linked (GlcNAc...) asparagine).

This sequence belongs to the transglutaminase superfamily. Transglutaminase family. Tetramer of two A chains (F13A1) and two B (F13B) chains. The cofactor is Ca(2+). Post-translationally, the activation peptide is released by thrombin.

The protein localises to the cytoplasm. The protein resides in the secreted. The catalysed reaction is L-glutaminyl-[protein] + L-lysyl-[protein] = [protein]-L-lysyl-N(6)-5-L-glutamyl-[protein] + NH4(+). In terms of biological role, factor XIII is activated by thrombin and calcium ion to a transglutaminase that catalyzes the formation of gamma-glutamyl-epsilon-lysine cross-links between fibrin chains, thus stabilizing the fibrin clot. Also cross-link alpha-2-plasmin inhibitor, or fibronectin, to the alpha chains of fibrin. The polypeptide is Coagulation factor XIII A chain (F13a1) (Mus musculus (Mouse)).